A 473-amino-acid polypeptide reads, in one-letter code: Cannabinoid receptor 1 (473 aa).

Over 1–121 (MKSILDGLAD…LNPSQQLAIA (121 aa)) the chain is Extracellular. The tract at residues 2–23 (KSILDGLADTTFRTITTDLLYV) is required for mitochondrial localization. N-linked (GlcNAc...) asparagine glycans are attached at residues Asn78 and Asn84. A helical membrane pass occupies residues 122–142 (VLSLTLGTFTVLENLLVLCVI). Residues 143–155 (LHSRSLRCRPSYH) are Cytoplasmic-facing. Residues 156-176 (FIGSLAVADLLGSVIFVYSFV) form a helical membrane-spanning segment. At 177–188 (DFHVFHRKDSPN) the chain is on the extracellular side. Residues 189-209 (VFLFKLGGVTASFTASVGSLF) form a helical membrane-spanning segment. Residues 210 to 233 (LTAIDRYISIHRPLAYKRIVTRPK) are Cytoplasmic-facing. Residues 234–254 (AVVAFCLMWTIAIVIAVLPLL) traverse the membrane as a helical segment. At 255–278 (GWNCKKLQSVCSDIFPLIDETYLM) the chain is on the extracellular side. Residues 279–299 (FWIGVTSVLLLFIVYAYMYIL) form a helical membrane-spanning segment. At 300-345 (WKAHSHAVRMIQRGTQKSIIIHTSEDGKVQVTRPDQARMDIRLAKT) the chain is on the cytoplasmic side. Residues 346-366 (LVLILVVLIICWGPLLAIMVY) traverse the membrane as a helical segment. Topologically, residues 367–378 (DVFGKMNKLIKT) are extracellular. A helical membrane pass occupies residues 379–399 (VFAFCSMLCLLNSTVNPIIYA). The Cytoplasmic segment spans residues 400–473 (LRSKDLRHAF…VSTDTSAEAL (74 aa)). Cys416 carries the S-palmitoyl cysteine lipid modification. Residues Ser426 and Ser430 each carry the phosphoserine modification.

Belongs to the G-protein coupled receptor 1 family. In terms of assembly, interacts (via C-terminus) with CNRIP1. Associates with G protein alpha subunits, including G(i) alpha-1/GNAI1, G(i) alpha-3/GNAI3 and G(o)-alpha/GNAO1; palmitoylation is important for interaction with GNAI3 and GNAO1. In terms of processing, palmitoylation at Cys-416 is important for recruitment at both plasma membrane and lipid rafts and association with G protein alpha subunits. As to expression, expressed in brain neurons (at protein level). Detected throughout the striatum, cortex and hippocampus, with highest levels in the lateral striatum. In rostral brain regions, high expression levels in the dorsal lateral striatum, while in the caudal brain regions, high levels are observed in the ventral lateral striatum. Expressed in neurons. In the hypothalamus, expressed in both GABAergic and glutamatergic presynaptic terminals of POMC neurons (at protein level). Expressed in striated muscles, including skeletal muscles (gastrocnemius and rectus abdominis) and myocardium (at protein level). Expressed in the liver, with highest levels in Kupffer cells and lower levels in endothelial cells as well as hepatocytes, particularly in perivascular areas (at protein level). The hepatic expression level is up-regulated in obese mice compared to lean animals.

The protein resides in the cell membrane. Its subcellular location is the mitochondrion outer membrane. It is found in the cell projection. It localises to the axon. The protein localises to the presynapse. Hemopressin, a peptide derived from hemoglobin subunit alpha (HBA1 and/or HBA2), acts as an antagonist peptide: hemopressin-binding efficiently blocks cannabinoid receptor CNR1 and subsequent signaling. G-protein coupled receptor for cannabinoids, including endocannabinoids (eCBs), such as N-arachidonoylethanolamide (also called anandamide or AEA) and 2-arachidonoylglycerol (2-AG). Mediates many cannabinoid-induced effects, acting, among others, on food intake, memory loss, gastrointestinal motility, catalepsy, ambulatory activity, anxiety, chronic pain. Signaling typically involves reduction in cyclic AMP. In the hypothalamus, may have a dual effect on mitochondrial respiration depending upon the agonist dose and possibly upon the cell type. Increases respiration at low doses, while decreases respiration at high doses. At high doses, CNR1 signal transduction involves G-protein alpha-i protein activation and subsequent inhibition of mitochondrial soluble adenylate cyclase, decrease in cyclic AMP concentration, inhibition of protein kinase A (PKA)-dependent phosphorylation of specific subunits of the mitochondrial electron transport system, including NDUFS2. In the hypothalamus, inhibits leptin-induced reactive oxygen species (ROS) formation and mediates cannabinoid-induced increase in SREBF1 and FASN gene expression. In response to cannabinoids, drives the release of orexigenic beta-endorphin, but not that of melanocyte-stimulating hormone alpha/alpha-MSH, from hypothalamic POMC neurons, hence promoting food intake. In the hippocampus, regulates cellular respiration and energy production in response to cannabinoids. Involved in cannabinoid-dependent depolarization-induced suppression of inhibition (DSI), a process in which depolarization of CA1 postsynaptic pyramidal neurons mobilizes eCBs, which retrogradely activate presynaptic CB1 receptors, transiently decreasing GABAergic inhibitory neurotransmission. Also reduces excitatory synaptic transmission. In superior cervical ganglions and cerebral vascular smooth muscle cells, inhibits voltage-gated Ca(2+) channels in a constitutive, as well as agonist-dependent manner. In cerebral vascular smooth muscle cells, cannabinoid-induced inhibition of voltage-gated Ca(2+) channels leads to vasodilation and decreased vascular tone. Induces leptin production in adipocytes and reduces LRP2-mediated leptin clearance in the kidney, hence participating in hyperleptinemia. In adipose tissue, CNR1 signaling leads to increased expression of SREBF1, ACACA and FASN genes. In the liver, activation by endocannabinoids leads to increased de novo lipogenesis and reduced fatty acid catabolism, associated with increased expression of SREBF1/SREBP-1, GCK, ACACA, ACACB and FASN genes. May also affect de novo cholesterol synthesis and HDL-cholesteryl ether uptake. Peripherally modulates energy metabolism. In high carbohydrate diet-induced obesity, may decrease the expression of mitochondrial dihydrolipoyl dehydrogenase/DLD in striated muscles, as well as that of selected glucose/ pyruvate metabolic enzymes, hence affecting energy expenditure through mitochondrial metabolism. In response to cannabinoid anandamide, elicits a pro-inflammatory response in macrophages, which involves NLRP3 inflammasome activation and IL1B and IL18 secretion. In macrophages infiltrating pancreatic islets, this process may participate in the progression of type-2 diabetes and associated loss of pancreatic beta-cells. In Mus musculus (Mouse), this protein is Cannabinoid receptor 1 (Cnr1).